Here is a 358-residue protein sequence, read N- to C-terminus: Membrane-bound lytic murein transglycosylase C (358 aa).

Positions 1 to 16 (MKKILALLVIAPLLVS) are cleaved as a signal peptide. The N-palmitoyl cysteine moiety is linked to residue C17. C17 carries S-diacylglycerol cysteine lipidation.

The protein belongs to the transglycosylase Slt family.

It localises to the cell outer membrane. It carries out the reaction Exolytic cleavage of the (1-&gt;4)-beta-glycosidic linkage between N-acetylmuramic acid (MurNAc) and N-acetylglucosamine (GlcNAc) residues in peptidoglycan, from either the reducing or the non-reducing ends of the peptidoglycan chains, with concomitant formation of a 1,6-anhydrobond in the MurNAc residue.. In terms of biological role, murein-degrading enzyme. May play a role in recycling of muropeptides during cell elongation and/or cell division. This chain is Membrane-bound lytic murein transglycosylase C, found in Yersinia pseudotuberculosis serotype O:1b (strain IP 31758).